Consider the following 347-residue polypeptide: Phosphoribosylformylglycinamidine cyclo-ligase (347 aa).

Belongs to the AIR synthase family.

It is found in the cytoplasm. The enzyme catalyses 2-formamido-N(1)-(5-O-phospho-beta-D-ribosyl)acetamidine + ATP = 5-amino-1-(5-phospho-beta-D-ribosyl)imidazole + ADP + phosphate + H(+). Its pathway is purine metabolism; IMP biosynthesis via de novo pathway; 5-amino-1-(5-phospho-D-ribosyl)imidazole from N(2)-formyl-N(1)-(5-phospho-D-ribosyl)glycinamide: step 2/2. The sequence is that of Phosphoribosylformylglycinamidine cyclo-ligase from Dechloromonas aromatica (strain RCB).